A 247-amino-acid chain; its full sequence is Aliphatic sulfonates import ATP-binding protein SsuB 3 (247 aa).

The ABC transporter domain maps to 28–242 (VSVRGLQRRY…ALRSILLEEL (215 aa)). Position 60-67 (60-67 (GESGCGKT)) interacts with ATP.

Belongs to the ABC transporter superfamily. Aliphatic sulfonates importer (TC 3.A.1.17.2) family. In terms of assembly, the complex is composed of two ATP-binding proteins (SsuB), two transmembrane proteins (SsuC) and a solute-binding protein (SsuA).

It is found in the cell inner membrane. The catalysed reaction is ATP + H2O + aliphatic sulfonate-[sulfonate-binding protein]Side 1 = ADP + phosphate + aliphatic sulfonateSide 2 + [sulfonate-binding protein]Side 1.. Part of the ABC transporter complex SsuABC involved in aliphatic sulfonates import. Responsible for energy coupling to the transport system. The polypeptide is Aliphatic sulfonates import ATP-binding protein SsuB 3 (Paraburkholderia xenovorans (strain LB400)).